We begin with the raw amino-acid sequence, 181 residues long: Type II secretion system protein H (181 aa).

Residues 1 to 5 (MRQRG) constitute a propeptide, leader sequence. Phe6 carries the post-translational modification N-methylphenylalanine. A helical transmembrane segment spans residues 6 to 29 (FTLLEIMLVVLLAGVAATLVMMAI).

The protein belongs to the GSP H family. In terms of assembly, type II secretion is composed of four main components: the outer membrane complex, the inner membrane complex, the cytoplasmic secretion ATPase and the periplasm-spanning pseudopilus. Interacts with core component OutG. Post-translationally, cleaved by prepilin peptidase. In terms of processing, methylated by prepilin peptidase at the amino group of the N-terminal phenylalanine once the leader sequence is cleaved by prepilin peptidase.

Its subcellular location is the cell inner membrane. Component of the type II secretion system required for the energy-dependent secretion of extracellular factors such as proteases and toxins from the periplasm. Part of the pseudopilus tip complex that is critical for the recognition and binding of secretion substrates. The chain is Type II secretion system protein H (outH) from Dickeya chrysanthemi (Pectobacterium chrysanthemi).